Consider the following 199-residue polypeptide: Thymidine kinase (199 aa).

ATP is bound by residues 9–16 and 93–96; these read GAMSSGKT and DEAQ. Glu94 serves as the catalytic Proton acceptor. Zn(2+) is bound by residues Cys151, Cys154, Cys188, and His191.

Belongs to the thymidine kinase family. In terms of assembly, homotetramer.

Its subcellular location is the cytoplasm. It carries out the reaction thymidine + ATP = dTMP + ADP + H(+). The chain is Thymidine kinase from Lactobacillus acidophilus (strain ATCC 700396 / NCK56 / N2 / NCFM).